The chain runs to 303 residues: UDP-3-O-acyl-N-acetylglucosamine deacetylase (303 aa).

Zn(2+) contacts are provided by histidine 78, histidine 237, and aspartate 241. Histidine 264 acts as the Proton donor in catalysis.

The protein belongs to the LpxC family. The cofactor is Zn(2+).

The enzyme catalyses a UDP-3-O-[(3R)-3-hydroxyacyl]-N-acetyl-alpha-D-glucosamine + H2O = a UDP-3-O-[(3R)-3-hydroxyacyl]-alpha-D-glucosamine + acetate. It participates in glycolipid biosynthesis; lipid IV(A) biosynthesis; lipid IV(A) from (3R)-3-hydroxytetradecanoyl-[acyl-carrier-protein] and UDP-N-acetyl-alpha-D-glucosamine: step 2/6. In terms of biological role, catalyzes the hydrolysis of UDP-3-O-myristoyl-N-acetylglucosamine to form UDP-3-O-myristoylglucosamine and acetate, the committed step in lipid A biosynthesis. In Azotobacter vinelandii (strain DJ / ATCC BAA-1303), this protein is UDP-3-O-acyl-N-acetylglucosamine deacetylase.